A 200-amino-acid chain; its full sequence is Large ribosomal subunit protein uL4 (200 aa).

The tract at residues 43-71 (RAQKTRAEVSGSGKKPWRQKGTGRARSGD) is disordered.

It belongs to the universal ribosomal protein uL4 family. Part of the 50S ribosomal subunit.

In terms of biological role, one of the primary rRNA binding proteins, this protein initially binds near the 5'-end of the 23S rRNA. It is important during the early stages of 50S assembly. It makes multiple contacts with different domains of the 23S rRNA in the assembled 50S subunit and ribosome. Its function is as follows. Forms part of the polypeptide exit tunnel. In Pasteurella multocida (strain Pm70), this protein is Large ribosomal subunit protein uL4.